The following is a 258-amino-acid chain: Snake venom serine protease 3 (258 aa).

The signal sequence occupies residues 1–18 (MVLIRVLANLLILQLSYA). Residues 19–24 (QKSSEL) constitute a propeptide that is removed on maturation. The Peptidase S1 domain occupies 25–249 (IIGGHPCNIN…YTDWIQSIIA (225 aa)). Disulfide bonds link Cys-31-Cys-163, Cys-50-Cys-66, Cys-98-Cys-256, Cys-142-Cys-210, Cys-174-Cys-189, and Cys-200-Cys-225. Asn-44 carries an N-linked (GlcNAc...) asparagine glycan. Active-site charge relay system residues include His-65 and Asp-110. The active-site Charge relay system is Ser-204. Asn-239 carries N-linked (GlcNAc...) asparagine glycosylation.

The protein belongs to the peptidase S1 family. Snake venom subfamily. In terms of assembly, monomer. As to expression, expressed by the venom gland.

It is found in the secreted. In terms of biological role, snake venom serine protease that may act in the hemostasis system of the prey. The protein is Snake venom serine protease 3 of Protobothrops jerdonii (Jerdon's pitviper).